The sequence spans 332 residues: Malate dehydrogenase 1, cytoplasmic (332 aa).

NAD(+) is bound by residues 16 to 17 (QI) and aspartate 43. The residue at position 56 (methionine 56) is a Methionine sulfoxide. Glycine 90 lines the NAD(+) pocket. Methionine 97 is subject to Methionine sulfoxide. Arginine 99 is a binding site for oxaloacetate. Glutamine 113 is an NAD(+) binding site. Residue lysine 119 forms a Glycyl lysine isopeptide (Lys-Gly) (interchain with G-Cter in ubiquitin) linkage. Asparagine 132 lines the NAD(+) pocket. 4 residues coordinate oxaloacetate: asparagine 132, arginine 163, histidine 188, and serine 243. The active-site Proton acceptor is histidine 188.

It belongs to the LDH/MDH superfamily. MDH type 2 family. In terms of assembly, forms a homodimer. Forms a disulfide-linked homodimer upon oxidation. Interacts with 14-3-3-like proteins GRF1 GRF3 and GRF8. Interacts with TRX1, TRX2, TRX3, TRX4 and TRX5. In terms of tissue distribution, expressed in rosette leaves.

The protein localises to the cytoplasm. The catalysed reaction is (S)-malate + NAD(+) = oxaloacetate + NADH + H(+). With respect to regulation, decreased activity upon treatment with hydrogen peroxide. Functionally, catalyzes a reversible NAD-dependent dehydrogenase reaction involved in central metabolism and redox homeostasis between organellar compartments. This Arabidopsis thaliana (Mouse-ear cress) protein is Malate dehydrogenase 1, cytoplasmic (MDH1).